Consider the following 540-residue polypeptide: Cobalt-factor III methyltransferase (540 aa).

4 residues coordinate [4Fe-4S] cluster: C402, C405, C439, and C443.

This sequence in the N-terminal section; belongs to the precorrin methyltransferase family. Requires [4Fe-4S] cluster as cofactor.

It carries out the reaction Co(II)-factor III + AH2 + S-adenosyl-L-methionine = Co-precorrin-4 + A + S-adenosyl-L-homocysteine. The protein operates within cofactor biosynthesis; adenosylcobalamin biosynthesis. Methyltransferase that catalyzes the reduction, ring contraction and methylation of C-17 in cobalt-factor III to form cobalt-precorrin-4. Is also able to convert cobalt-precorrin-3 to cobalt-precorrin-4. The protein is Cobalt-factor III methyltransferase (cbiH60) of Priestia megaterium (Bacillus megaterium).